Consider the following 1265-residue polypeptide: MELLGVRQPFGPQFQEEKYQMLELNHRLESYLGRVKLLEEENKLLREEIHTLKSSRDPAGQRKAQEEALSQARRMMEEAWRKKDCVELEVENLMEDMEKVSFQRKKVKTAQAEAQRKLTESRKELEEERRAQIWLREKVGQLEKDLMLQMQVHQENMETMQASLKQTKQVLMAPQRVQATSIPDLGQEYGYKAAQAWQEAANNYQKQVGRLEESLNQTKANMTKIYQEKRESQRQVQHLAKELESTRIKRQMLEKHAMQQREEQKEELQHLQAQVNTLELEKDCLGQQIDSLMLDRQHLLQVKMSLGLEVATYRALLDSEGLRIDRPTPNKTSSTVFLDALSKPTGIQSTSQTTAASCLLSSSVSTSHRSIASSRSLLTSAAPSWTLTRGTPQRPPSSTSMTEKTEDHISEETKRSAEESVDQLQQEKVQQDWTLESTLPKTSAEPKPELQPEEIKVEDEANEPQQAHMVESKTDESELTSVPAEQQGSMSQTPETKSWAGHFNDPAEVSEDGKDEDTEVSVEMARISHAPKVAWEEIKSAVEDEKDDASEMDVRSEIISESHTFAYGDAENDSNTLTSSHISQNTNALASSFLEQGTLDSASYFGYEATNENLMKEEELDNVSNISEEVTEQLNSETEAAIDSINEWDRQEESEPENETKVMTSYFEVEEGEMSINTDTKDKTEDDIEREELEVTEREILVQSAGGMLGVDLPNDTDHQDEHNLPQIELNEDQSEAEEENQKEKQCDEDDSPNISASLKTDPGEGDSYSQEHTLADTRPLIRYKSDEETSHHIGETSDSEDEKERIDQGHLNEKRFNTMEDLTEEPDMEVTGKMRLEDLVSNEEAAADDVASVMFQKVSGDHESLDVVVQESERKGNLEKEDSGDADNMRDNKEEDVSVFEQNENQQLTEHQHVHTEQVEDKPVHSHETQEHVNTEFSSTFSERSQQEQLEESSLTMFEDEAATKEAEDSDVSMHTNIDLIDSRSLESEINGQPDIMTSDMANSECNSSEDESPNASQCFQNTSLLAAATPNEQPLTFTNEVSKADYVSDNNDVPEEVLSEEKSTDEPKASQIDDLENFNIWGESTSISDAAQTTHASMDEHSSISPVNENLESSNKIPSVAENIFGHFEEHLERSVESFPEKEVTVMDFENNDLGEEFQSKQMKSEIHSFFSTSLKQDFWSEGKMEMAATYDPAKTEDLNQAMVFGEEWREIGVQSANGDTKEEMEILKIRDDKQKDGQPAQSKIVQSDDSADEGDSWSSGDE.

A head region spans residues 1–16; sequence MELLGVRQPFGPQFQE. Residues 17–52 form a coil 1A region; it reads EKYQMLELNHRLESYLGRVKLLEEENKLLREEIHTL. An IF rod domain is found at 17–324; it reads EKYQMLELNH…ALLDSEGLRI (308 aa). Residues 53–64 form a linker 1 region; it reads KSSRDPAGQRKA. Residues 65–160 are coil 1B; that stretch reads QEEALSQARR…QVHQENMETM (96 aa). Residues 161–183 are linker 12; the sequence is QASLKQTKQVLMAPQRVQATSIP. Residues 184 to 203 are coil 2A; the sequence is DLGQEYGYKAAQAWQEAANN. The interval 204–206 is linker 2; sequence YQK. Residues 207–324 form a coil 2B region; that stretch reads QVGRLEESLN…ALLDSEGLRI (118 aa). Positions 325-1265 are tail; sequence DRPTPNKTSS…EGDSWSSGDE (941 aa). Residues 383-402 show a composition bias toward polar residues; sequence PSWTLTRGTPQRPPSSTSMT. Disordered stretches follow at residues 383-521, 667-830, 863-1073, 1093-1116, and 1232-1265; these read PSWT…TEVS, FEVE…PDME, HESL…KASQ, AQTT…LESS, and IRDD…SGDE. Positions 403 to 418 are enriched in basic and acidic residues; it reads EKTEDHISEETKRSAE. The segment covering 422–441 has biased composition (polar residues); the sequence is DQLQQEKVQQDWTLESTLPK. Basic and acidic residues predominate over residues 444–459; it reads AEPKPELQPEEIKVED. Polar residues predominate over residues 479-496; the sequence is LTSVPAEQQGSMSQTPET. 2 stretches are compositionally biased toward acidic residues: residues 508–520 and 730–739; these read EVSE…DTEV and LNEDQSEAEE. Basic and acidic residues-rich tracts occupy residues 784-796, 803-819, and 863-897; these read YKSD…HIGE, EKER…RFNT, and HESL…KEED. The span at 901-910 shows a compositional bias: polar residues; it reads FEQNENQQLT. Residues 911–935 are compositionally biased toward basic and acidic residues; it reads EHQHVHTEQVEDKPVHSHETQEHVN. Over residues 943–956 the composition is skewed to low complexity; that stretch reads SERSQQEQLEESSL. Positions 1015–1043 are enriched in polar residues; the sequence is PNASQCFQNTSLLAAATPNEQPLTFTNEV. Over residues 1061–1070 the composition is skewed to basic and acidic residues; the sequence is SEEKSTDEPK. Composition is skewed to polar residues over residues 1105 to 1116 and 1242 to 1251; these read SISPVNENLESS and PAQSKIVQSD. The span at 1252–1265 shows a compositional bias: acidic residues; sequence DSADEGDSWSSGDE.

It belongs to the intermediate filament family. Forms homodimers and homotetramers in vitro. In mixtures with other intermediate filament proteins such as vimentin and alpha-internexin, preferentially forms heterodimers. As to expression, widely expressed throughout the developing nervous system at 24 hours post-fertilization (hpf). As development progresses, expression becomes restricted to proliferative zones of the developing and postembryonic central nervous system. In the peripheral nervous system, expressed in the cranial ganglia. Also expressed in mesodermal muscle precursor cells and in cranial mesenchymal tissue.

Functionally, promotes the disassembly of phosphorylated vimentin intermediate filaments (IF) during mitosis and may play a role in the trafficking and distribution of IF proteins and other cellular factors to daughter cells during progenitor cell division. Required for survival, renewal and mitogen-stimulated proliferation of neural progenitor cells. Required for brain and eye development. This is Nestin (nes) from Danio rerio (Zebrafish).